The chain runs to 94 residues: Integration host factor subunit beta (94 aa).

Belongs to the bacterial histone-like protein family. Heterodimer of an alpha and a beta chain.

This protein is one of the two subunits of integration host factor, a specific DNA-binding protein that functions in genetic recombination as well as in transcriptional and translational control. The sequence is that of Integration host factor subunit beta from Ruegeria pomeroyi (strain ATCC 700808 / DSM 15171 / DSS-3) (Silicibacter pomeroyi).